The primary structure comprises 511 residues: Membrane-bound lytic murein transglycosylase F (511 aa).

The first 19 residues, 1–19 (MKKLKINYLLIGIVTLLLA), serve as a signal peptide directing secretion. The segment at 20-269 (AALWPSIPWS…RLEEKYLGHG (250 aa)) is non-LT domain. The LT domain stretch occupies residues 270-511 (NDFDYVDTRT…ARMKLPGHLY (242 aa)). The active site involves glutamate 314.

In the N-terminal section; belongs to the bacterial solute-binding protein 3 family. This sequence in the C-terminal section; belongs to the transglycosylase Slt family.

It is found in the cell outer membrane. The catalysed reaction is Exolytic cleavage of the (1-&gt;4)-beta-glycosidic linkage between N-acetylmuramic acid (MurNAc) and N-acetylglucosamine (GlcNAc) residues in peptidoglycan, from either the reducing or the non-reducing ends of the peptidoglycan chains, with concomitant formation of a 1,6-anhydrobond in the MurNAc residue.. Murein-degrading enzyme that degrades murein glycan strands and insoluble, high-molecular weight murein sacculi, with the concomitant formation of a 1,6-anhydromuramoyl product. Lytic transglycosylases (LTs) play an integral role in the metabolism of the peptidoglycan (PG) sacculus. Their lytic action creates space within the PG sacculus to allow for its expansion as well as for the insertion of various structures such as secretion systems and flagella. In Klebsiella pneumoniae subsp. pneumoniae (strain ATCC 700721 / MGH 78578), this protein is Membrane-bound lytic murein transglycosylase F.